We begin with the raw amino-acid sequence, 139 residues long: Non-structural protein 1 (139 aa).

The DLNP; interaction with MAP1B signature appears at 136–139 (DLNP).

This sequence belongs to the pneumovirus non-structural protein 1 family. As to quaternary structure, monomer. Homomultimer. Heteromultimer with NS2. Interacts with the matrix protein M. Interacts with host ELOC and CUL2; this interaction allows NS1 to form an active E3 ligase with ELOC and CUL2. Interacts with host IRF3; this interaction leads to the disrupted association of IRF3 with CREBBP and thus reduced binding of IRF3 to the IFN-beta promoter. Interacts with host MAVS; this interaction prevents MAVS binding to RIGI and inhibits signaling pathway leading to interferon production. Interacts with host MAP1B/microtubule-associated protein 1B. Interacts with host TRIM25 (via SPRY domain); this interaction suppresses RIGI ubiquitination and results in decreased interaction between RIGI and MAVS.

The protein resides in the host cytoplasm. It localises to the host mitochondrion. It is found in the host nucleus. In terms of biological role, plays a major role in antagonizing the type I IFN-mediated antiviral response by degrading or inhibiting multiple cellular factors required for either IFN induction or response pathways. Acts cooperatively with NS2 to repress activation and nuclear translocation of host IFN-regulatory factor IRF3. Also disrupts the association of IRF3 with CREBBP. Interacts with host mitochondrial-associated membrane (MAM) MAVS and prevents the interaction with RIGI. Interacts with TRIM25 to suppress TRIM25-mediated RIGI ubiquitination and thereby RIGI-MAVS interaction. Together with NS2, participates in the proteasomal degradation of host STAT2, IRF3, IRF7, TBK1 and RIGI through a NS-degradasome involving CUL2 and Elongin-C. The degradasome requires an intact mitochondrial MAVS. Decreases the levels of host TRAF3 and IKBKE/IKK-epsilon. As functions other than disruptions of the type I IFN-mediated antiviral signaling pathways, induces host SOCS1 and SOCS3 expression. Suppresses premature apoptosis by an NF-kappa-B-dependent, interferon-independent mechanism and thus facilitates virus growth. Additionally, NS1 may serve some inhibitory role in viral transcription and RNA replication. Suppresses proliferation and activation of host CD103+ CD8+ cytotoxic T-lymphocytes and Th17 helper T-lymphocytes. The polypeptide is Non-structural protein 1 (1C) (Homo sapiens (Human)).